Here is a 317-residue protein sequence, read N- to C-terminus: Succinate receptor 1 (317 aa).

At 1–27 (MAQNLSCENWLALENILKKYYLSAFYG) the chain is on the extracellular side. N-linked (GlcNAc...) asparagine glycosylation occurs at Asn-4. A helical membrane pass occupies residues 28–48 (IEFIVGMLGNFTVVFGYLFCM). Residues 49–55 (KNWNSSN) lie on the Cytoplasmic side of the membrane. Residues 56–76 (VYLFNLSISDLAFLCTLPMLI) traverse the membrane as a helical segment. The Extracellular portion of the chain corresponds to 77-99 (RSYATGNWTYGDVLCISNRYVLH). Cys-91 and Cys-168 are disulfide-bonded. Residues 100 to 120 (ANLYTSILFLTFISIDRYLLM) form a helical membrane-spanning segment. The Cytoplasmic segment spans residues 121–133 (KFPFREHILQKKE). The helical transmembrane segment at 134 to 154 (FAILISLAVWVLVTLEVLPML) threads the bilayer. Residues 155-181 (TFITSTPIEKGDSCVDYASSGNPKYSL) are Extracellular-facing. A helical membrane pass occupies residues 182–202 (IYSLCLTLLGFLIPLSVMCFF). The Cytoplasmic segment spans residues 203-226 (YYKMVVFLKKRSQQQATVLSLNKP). The helical transmembrane segment at 227–247 (LRLVVLAVVIFSVLFTPYHIM) threads the bilayer. The Extracellular portion of the chain corresponds to 248–276 (RNVRIASRLDSWPQGCSQKAIKCLYILTR). The chain crosses the membrane as a helical span at residues 277–297 (PLAFLNSAVNPIFYFLVGDHF). At 298-317 (RDMLFSKLRQYFKSLTSFRL) the chain is on the cytoplasmic side.

Belongs to the G-protein coupled receptor 1 family. As to expression, expressed in retina.

It localises to the cell membrane. Its function is as follows. G protein-coupled receptor for succinate able to mediate signaling through Gq/GNAQ or Gi/GNAI second messengers depending on the cell type and the processes regulated. Succinate-SUCNR1 signaling serves as a link between metabolic stress, inflammation and energy homeostasisn. In macrophages, plays a range of immune-regulatory roles. During inflammation, succinate-SUCNR1 signaling may act as an anti-inflammatory mediator or boost inflammation depending on the inflammatory status of cells. Hyperpolarizes M2 macrophages versus M1 phenotype through Gq signaling by regulating the transcription of genes involved in immune function. In activated M1 macrophages, plays a pro-inflammatory role in response to LPS. Expressed in dendritic cells, where it is involved in the sensing of immunological danger and enhances immunity. Mediates succinate triggered intracelleular calcium mobilization, induces migratory responses and acts in synergy with Toll-like receptor ligands for the production of proinflammatory cytokines as well as an enhancement of antigen-specific activation of helper T cells. In the small intestine, mediates the activation of tuft cells by dietary succinate and triggers type 2 immunity. In adipocytes, plays an important role in the control of energy metabolism. In response to succinate, controls leptin expression in an AMPK-JNK-CEBPA-dependent as well as circadian clock-regulated manner. In muscle tissue, is expressed in non-muscle cells and coordinates muscle remodeling in response to the succinate produced during exercise training in a paracrine manner. In retina, acts as a mediator of vessel growth during retinal development. In response to succinate, regulates the production of angiogenic factors, including VEGF, by retinal ganglion neurons. The chain is Succinate receptor 1 (Sucnr1) from Rattus norvegicus (Rat).